Reading from the N-terminus, the 430-residue chain is UDP-N-acetylmuramoylalanine--D-glutamate ligase (430 aa).

109–115 (GTDGKST) contacts ATP.

This sequence belongs to the MurCDEF family.

It localises to the cytoplasm. It carries out the reaction UDP-N-acetyl-alpha-D-muramoyl-L-alanine + D-glutamate + ATP = UDP-N-acetyl-alpha-D-muramoyl-L-alanyl-D-glutamate + ADP + phosphate + H(+). The protein operates within cell wall biogenesis; peptidoglycan biosynthesis. Cell wall formation. Catalyzes the addition of glutamate to the nucleotide precursor UDP-N-acetylmuramoyl-L-alanine (UMA). The polypeptide is UDP-N-acetylmuramoylalanine--D-glutamate ligase (Thermotoga maritima (strain ATCC 43589 / DSM 3109 / JCM 10099 / NBRC 100826 / MSB8)).